We begin with the raw amino-acid sequence, 77 residues long: Large ribosomal subunit protein bL31 (77 aa).

The Zn(2+) site is built by C16, C18, C37, and C40.

It belongs to the bacterial ribosomal protein bL31 family. Type A subfamily. As to quaternary structure, part of the 50S ribosomal subunit. Zn(2+) is required as a cofactor.

Binds the 23S rRNA. The polypeptide is Large ribosomal subunit protein bL31 (Pseudomonas fluorescens (strain SBW25)).